A 463-amino-acid polypeptide reads, in one-letter code: METLLVVLHVFILFLLILGLFVMQKKHVSFSKRVFTALGLGIVFGFALQLIYGPTSNIVIQTADWFNIAGGGYVKLLQMVVMPLVFISILGAFTKLKLTKNLGKISGLIIGILVATTAVAAAVGIASALSFDLQAIQVDQGSTELSRGQELQQKSEDMTAKTLPQQIVELLPGNPFLDFTGARPTSTIAVVIFAAFLGVAFLGVKHKQPEQAETFKKLVDAVYAIVMRVVTLILRLTPYGVLAIMTKTIATSDLDSILKLGMFVIASYAALITMFIIHLLLLTFSGLNPVIYLKKAVPVLVFAFTSRSSAGALPLNIKTQRSMGVPEGIANFAGSFGLSIGQNGCAGIYPAMLAMMIAPTVGQNPFDPVFIITVIAVVAISSFGVAGVGGGATFAALLVLSSLNMPVALAGLLISIEPLIDMGRTALNVSGSMTSGLITSKVTKEIDQGAFHDQSRVIEAEEA.

10 consecutive transmembrane segments (helical) span residues 3 to 23 (TLLV…LFVM), 34 to 54 (VFTA…IYGP), 73 to 93 (YVKL…LGAF), 105 to 125 (ISGL…AVGI), 184 to 204 (PTST…FLGV), 225 to 245 (IVMR…LAIM), 262 to 282 (MFVI…LLLL), 338 to 358 (LSIG…MMIA), 369 to 389 (VFII…AGVG), and 394 to 414 (FAAL…GLLI).

Belongs to the dicarboxylate/amino acid:cation symporter (DAACS) (TC 2.A.23) family.

It localises to the cell membrane. In terms of biological role, mediates uptake of L-cystine, the oxidized form of L-cysteine. Although it is more specific for L-cystine, it could also transport a much broader range of amino acids and sulfur compounds including S-methylcysteine. This chain is L-cystine uptake protein TcyP (tcyP), found in Bacillus subtilis (strain 168).